Here is a 217-residue protein sequence, read N- to C-terminus: Small ribosomal subunit protein uS3 (217 aa).

One can recognise a KH type-2 domain in the interval 38–106 (IRKFIDNELK…KVHINVIEIK (69 aa)).

Belongs to the universal ribosomal protein uS3 family. Part of the 30S ribosomal subunit. Forms a tight complex with proteins S10 and S14.

Binds the lower part of the 30S subunit head. Binds mRNA in the 70S ribosome, positioning it for translation. The protein is Small ribosomal subunit protein uS3 (rpsC) of Staphylococcus aureus (strain COL).